The sequence spans 440 residues: uncharacterized protein (440 aa).

A signal peptide spans 1-19 (MKKLLLAASIIYFASVSLA).

This is an uncharacterized protein from Rickettsia typhi (strain ATCC VR-144 / Wilmington).